Consider the following 364-residue polypeptide: MQFFCVNLYRSVLNLLEERMKTEMIEEMVIVGGLVMVQFVYAGNSLLMSYLMSLGLGPFTIVIFSTFATFIILSPFAILFERKQWPNELSLRLIGKLVLISFAGVTLFQSLFLEGIRLTSPAMATAMPNLAPGLIFFIAWIVGLEKMNLKCVYSKLKILGTLLCVFGALAMSVMHSTSISHKEEDDTPIFVFDRDKVVGCIYLLGAVFVLSTNVVLQASTLAEFPAPISLSAITALLGVLITTVVLLLQNRKTKVLASSLISFGNLVGYSVLAGAVSGACVSFNGWAMKKRGPVFVSMFSPFATVISVAFAVLTLGESVSLGSVGGMVLMFVGLYLVLWAKGKEGFSEIESFESEFDSKKPLLS.

Transmembrane regions (helical) follow at residues 28 to 48, 59 to 79, 93 to 113, 124 to 144, 158 to 178, 197 to 217, 228 to 248, 255 to 275, 293 to 313, and 319 to 339; these read MVIV…SLLM, FTIV…FAIL, LIGK…SLFL, ATAM…IVGL, ILGT…HSTS, VVGC…VVLQ, ISLS…VLLL, VLAS…LAGA, PVFV…FAVL, and VSLG…LVLW. Positions 40-172 constitute an EamA 1 domain; that stretch reads VYAGNSLLMS…LCVFGALAMS (133 aa). Residues 219–338 form the EamA 2 domain; that stretch reads STLAEFPAPI…LMFVGLYLVL (120 aa).

It belongs to the drug/metabolite transporter (DMT) superfamily. Plant drug/metabolite exporter (P-DME) (TC 2.A.7.4) family.

It is found in the membrane. This is WAT1-related protein At5g47470 from Arabidopsis thaliana (Mouse-ear cress).